Here is a 217-residue protein sequence, read N- to C-terminus: Small ribosomal subunit protein uS3 (217 aa).

The KH type-2 domain occupies 38 to 106 (IRKFVQKELA…QVHINIIEIK (69 aa)).

It belongs to the universal ribosomal protein uS3 family. Part of the 30S ribosomal subunit. Forms a tight complex with proteins S10 and S14.

Functionally, binds the lower part of the 30S subunit head. Binds mRNA in the 70S ribosome, positioning it for translation. This Streptococcus sanguinis (strain SK36) protein is Small ribosomal subunit protein uS3.